The primary structure comprises 743 residues: Threonine synthase-like 1 (743 aa).

Lys281 is modified (N6-acetyllysine). Lys351 is modified (N6-(pyridoxal phosphate)lysine).

Belongs to the threonine synthase family. Pyridoxal 5'-phosphate is required as a cofactor.

This is Threonine synthase-like 1 (THNSL1) from Pongo abelii (Sumatran orangutan).